The sequence spans 88 residues: Putative membrane protein insertion efficiency factor (88 aa).

It belongs to the UPF0161 family.

Its subcellular location is the cell membrane. Functionally, could be involved in insertion of integral membrane proteins into the membrane. The chain is Putative membrane protein insertion efficiency factor from Exiguobacterium sibiricum (strain DSM 17290 / CCUG 55495 / CIP 109462 / JCM 13490 / 255-15).